We begin with the raw amino-acid sequence, 152 residues long: Small integral membrane protein 28 (152 aa).

The chain crosses the membrane as a helical span at residues F52–L72. Residues P117–V152 form a disordered region.

It localises to the membrane. The sequence is that of Small integral membrane protein 28 from Homo sapiens (Human).